Reading from the N-terminus, the 200-residue chain is ATP synthase subunit s, mitochondrial (200 aa).

The transit peptide at 1 to 25 directs the protein to the mitochondrion; sequence MMPFGKISQQLCGVKKLPWSCDSRY. The interval 1–61 is N-terminal domain; that stretch reads MMPFGKISQQ…SEWLLRCGAM (61 aa). Gly59 is a binding site for Mg(2+). LRR repeat units follow at residues 62-87, 88-116, 117-141, and 142-173; these read VRYH…KYKI, QAID…KIRL, CKCH…KTIL, and EMEI…LSDL. Thr93 contacts Mg(2+).

This sequence belongs to the ATP synthase subunit s family. As to quaternary structure, homotetramer. Associates with ATP synthase.

The protein localises to the mitochondrion. Its subcellular location is the mitochondrion inner membrane. Its function is as follows. Involved in regulation of mitochondrial membrane ATP synthase. Necessary for H(+) conduction of ATP synthase. Facilitates energy-driven catalysis of ATP synthesis by blocking a proton leak through an alternative proton exit pathway. The protein is ATP synthase subunit s, mitochondrial of Homo sapiens (Human).